A 364-amino-acid polypeptide reads, in one-letter code: Eukaryotic translation initiation factor 3 subunit H (364 aa).

Residues 13–162 (VQVDALVAIK…LRAYRLSPSF (150 aa)) enclose the MPN domain.

This sequence belongs to the eIF-3 subunit H family. Component of the eukaryotic translation initiation factor 3 (eIF-3) complex.

Its subcellular location is the cytoplasm. In terms of biological role, component of the eukaryotic translation initiation factor 3 (eIF-3) complex, which is involved in protein synthesis of a specialized repertoire of mRNAs and, together with other initiation factors, stimulates binding of mRNA and methionyl-tRNAi to the 40S ribosome. The eIF-3 complex specifically targets and initiates translation of a subset of mRNAs involved in cell proliferation. This Phaeosphaeria nodorum (strain SN15 / ATCC MYA-4574 / FGSC 10173) (Glume blotch fungus) protein is Eukaryotic translation initiation factor 3 subunit H.